Here is a 238-residue protein sequence, read N- to C-terminus: Segregation and condensation protein A (238 aa).

Belongs to the ScpA family. Component of a cohesin-like complex composed of ScpA, ScpB and the Smc homodimer, in which ScpA and ScpB bind to the head domain of Smc. The presence of the three proteins is required for the association of the complex with DNA.

Its subcellular location is the cytoplasm. In terms of biological role, participates in chromosomal partition during cell division. May act via the formation of a condensin-like complex containing Smc and ScpB that pull DNA away from mid-cell into both cell halves. The chain is Segregation and condensation protein A from Macrococcus caseolyticus (strain JCSC5402) (Macrococcoides caseolyticum).